The following is a 470-amino-acid chain: Neuraminidase (470 aa).

Topologically, residues 1 to 14 (MNPNQKIITIGSVS) are intravirion. The segment at 11–32 (GSVSLGLVVLNILLHIVSITIT) is involved in apical transport and lipid raft association. The chain crosses the membrane as a helical span at residues 15 to 35 (LGLVVLNILLHIVSITITVLV). Positions 32 to 86 (TVLVLPGNGNNGSCNETVIREYNETVRIEKVTQWHNTNVIEYIERPESDHFMNNT) are hypervariable stalk region. Over 36–470 (LPGNGNNGSC…AILPFDIDKM (435 aa)) the chain is Virion surface. N-linked (GlcNAc...) asparagine; by host glycosylation is found at asparagine 42, asparagine 46, asparagine 54, and asparagine 84. The head of neuraminidase stretch occupies residues 89-470 (LCDVKGFAPF…AILPFDIDKM (382 aa)). Intrachain disulfides connect cysteine 90/cysteine 417, cysteine 122/cysteine 127, cysteine 182/cysteine 229, cysteine 231/cysteine 236, cysteine 277/cysteine 290, cysteine 279/cysteine 288, cysteine 316/cysteine 335, and cysteine 421/cysteine 446. Arginine 116 contributes to the substrate binding site. A glycan (N-linked (GlcNAc...) asparagine; by host) is linked at asparagine 144. The Proton donor/acceptor role is filled by aspartate 149. A substrate-binding site is contributed by arginine 150. 275–276 (EE) serves as a coordination point for substrate. Arginine 291 lines the substrate pocket. A Ca(2+)-binding site is contributed by aspartate 292. A glycan (N-linked (GlcNAc...) asparagine; by host) is linked at asparagine 293. Glycine 296 and aspartate 322 together coordinate Ca(2+). A substrate-binding site is contributed by arginine 368. Asparagine 398 is a glycosylation site (N-linked (GlcNAc...) asparagine; by host). Tyrosine 402 (nucleophile) is an active-site residue.

The protein belongs to the glycosyl hydrolase 34 family. Homotetramer. Ca(2+) serves as cofactor. In terms of processing, N-glycosylated.

It localises to the virion membrane. The protein resides in the host apical cell membrane. It catalyses the reaction Hydrolysis of alpha-(2-&gt;3)-, alpha-(2-&gt;6)-, alpha-(2-&gt;8)- glycosidic linkages of terminal sialic acid residues in oligosaccharides, glycoproteins, glycolipids, colominic acid and synthetic substrates.. With respect to regulation, inhibited by the neuraminidase inhibitors zanamivir (Relenza) and oseltamivir (Tamiflu). These drugs interfere with the release of progeny virus from infected cells and are effective against all influenza strains. Resistance to neuraminidase inhibitors is quite rare. Its function is as follows. Catalyzes the removal of terminal sialic acid residues from viral and cellular glycoconjugates. Cleaves off the terminal sialic acids on the glycosylated HA during virus budding to facilitate virus release. Additionally helps virus spread through the circulation by further removing sialic acids from the cell surface. These cleavages prevent self-aggregation and ensure the efficient spread of the progeny virus from cell to cell. Otherwise, infection would be limited to one round of replication. Described as a receptor-destroying enzyme because it cleaves a terminal sialic acid from the cellular receptors. May facilitate viral invasion of the upper airways by cleaving the sialic acid moieties on the mucin of the airway epithelial cells. Likely to plays a role in the budding process through its association with lipid rafts during intracellular transport. May additionally display a raft-association independent effect on budding. Plays a role in the determination of host range restriction on replication and virulence. Sialidase activity in late endosome/lysosome traffic seems to enhance virus replication. This is Neuraminidase from Aves (Horse).